A 231-amino-acid chain; its full sequence is MDARQMKIKAAEAALEHVENGMRLGIGTGSTAEEFVRVLAEKVASGFQISGVPTSERTARLCLELGVPLKSLDELPELDLTIDGADEVDGKLRLIKGGGGALLREKIVASASARMIVIADETKVVDVLGAFKLPIEVNPFGQLATRLAIEKVASRLGLTGDIVVRASGDGPFMTDGGHLILDASFGRIPDADALAVELNAIPGVVEHGLFIEMASMAIIAGPEGARTLKAS.

Substrate-binding positions include 28–31, 83–86, and 96–99; these read TGST, DGAD, and KGGG. The active-site Proton acceptor is glutamate 105. Lysine 123 lines the substrate pocket.

It belongs to the ribose 5-phosphate isomerase family. In terms of assembly, homodimer.

The enzyme catalyses aldehydo-D-ribose 5-phosphate = D-ribulose 5-phosphate. It participates in carbohydrate degradation; pentose phosphate pathway; D-ribose 5-phosphate from D-ribulose 5-phosphate (non-oxidative stage): step 1/1. Catalyzes the reversible conversion of ribose-5-phosphate to ribulose 5-phosphate. In Sinorhizobium medicae (strain WSM419) (Ensifer medicae), this protein is Ribose-5-phosphate isomerase A.